The primary structure comprises 204 residues: Peptide chain release factor homolog (204 aa).

Residues 2–98 (ILLQLSSAQG…KNWFLGIGRF (97 aa)) form an rRNA-recognition domain, N-terminus region. Residues 99-107 (TADEQEQSD) form a linker 1 region. The segment at 108-161 (AIRYETLRSSGPGGQHVNKTDSAVRATHLASGISVKVQSERSQHANKRLARLLI) is GGQ domain. Residues 120–122 (GGQ) carry the GGQ motif motif. A linker 2 region spans residues 162–179 (AWKLEQQQQENSAALKSQ). The segment at 180–204 (RRMFHHQIERGNPRRTFTGMAFIEG) is rRNA-recognition domain, C-terminus.

It belongs to the prokaryotic/mitochondrial release factor family. In terms of assembly, found in the A site of damaged 70S ribosomes, but not in undamaged ribosomes. Contacts (damaged) 16S rRNA, 23S rRNA and ribosomal protein uS12, but not mRNA.

In terms of biological role, peptide chain release-like factor that acts on 70S ribosomes with specific damage to their decoding center (cleavage of 16S rRNA between adenine-1493 and guanosine-1494, E.coli 16S rRNA numbering). Probably acts as a peptidyl-tRNA hydrolase, allowing release of the nascent chain and dissociation of the 30S and 50S subunits. Can release mRNA as short as 19 nucleotides (nt, mRNA-19, which has a single amino acid in the P-site and only a single nt in the A-site) from the ribosome. This specific cleavage is inflicted by CdiA (ECL_04451) or by colicin E3-type (ColE3) proteins. In vivo the PrfH-RtcB2 pair restores growth in the presence of ribotoxins that specifically create this damage. The chain is Peptide chain release factor homolog from Escherichia coli (strain ATCC 25922 / DSM 1103 / LMG 8223 / NCIMB 12210 / NCTC 12241 / WDCM 00013 / Seattle 1946).